Here is a 348-residue protein sequence, read N- to C-terminus: D-alanine--D-alanine ligase (348 aa).

Positions 136 to 344 constitute an ATP-grasp domain; sequence KSVFKSYNLP…LEKLVANLIE (209 aa). Residue 171–226 participates in ATP binding; it reads NKIISYPCFIKPANLGSSVGITKAYSKEEFIAGIEFAAKYDERIIVEKSIEGRELE. D297, E311, and N313 together coordinate Mg(2+).

It belongs to the D-alanine--D-alanine ligase family. It depends on Mg(2+) as a cofactor. Mn(2+) is required as a cofactor.

The protein resides in the cytoplasm. The catalysed reaction is 2 D-alanine + ATP = D-alanyl-D-alanine + ADP + phosphate + H(+). The protein operates within cell wall biogenesis; peptidoglycan biosynthesis. In terms of biological role, cell wall formation. The sequence is that of D-alanine--D-alanine ligase from Prochlorococcus marinus (strain NATL2A).